The chain runs to 377 residues: MYVRRLELVDFRSYERVGVDLEPGANVLVGPNGVGKTNLIEALGYVATLDSHRVATDAPLVRMGAAAGIIRCAVVHEGRELLVELEIVPGRANRARLGRSPARRARDVLGALRLVLFAPEDLELVRGDPAQRRRYLDDLLVLRQPRYAGVRTDYERVVRQRNALLRTAYLARKTGGTRGGDLSTLAVWDDHLARHGAELLAGRLDLVAALAPHVNRAYDAVAAGAGAAGIAYRSSVELASSTADRADLTAALSDALAAGRTAEIERGTTLVGPHRDELTLTLGPLPAKGYASHGESWSFALALRLAGYDLLRADGIEPVLVLDDVFAELDTGRRDRLAELVGDASQLLVTCAVEEDLPARLRGARFVVREGEVQRVG.

30–37 (GPNGVGKT) lines the ATP pocket.

Belongs to the RecF family.

It is found in the cytoplasm. The RecF protein is involved in DNA metabolism; it is required for DNA replication and normal SOS inducibility. RecF binds preferentially to single-stranded, linear DNA. It also seems to bind ATP. This Salinispora tropica (strain ATCC BAA-916 / DSM 44818 / JCM 13857 / NBRC 105044 / CNB-440) protein is DNA replication and repair protein RecF.